The chain runs to 157 residues: 2-amino-4-hydroxy-6-hydroxymethyldihydropteridine pyrophosphokinase (157 aa).

It belongs to the HPPK family.

It catalyses the reaction 6-hydroxymethyl-7,8-dihydropterin + ATP = (7,8-dihydropterin-6-yl)methyl diphosphate + AMP + H(+). It participates in cofactor biosynthesis; tetrahydrofolate biosynthesis; 2-amino-4-hydroxy-6-hydroxymethyl-7,8-dihydropteridine diphosphate from 7,8-dihydroneopterin triphosphate: step 4/4. Functionally, catalyzes the transfer of pyrophosphate from adenosine triphosphate (ATP) to 6-hydroxymethyl-7,8-dihydropterin, an enzymatic step in folate biosynthesis pathway. This is 2-amino-4-hydroxy-6-hydroxymethyldihydropteridine pyrophosphokinase (folK) from Campylobacter jejuni subsp. jejuni serotype O:2 (strain ATCC 700819 / NCTC 11168).